A 317-amino-acid polypeptide reads, in one-letter code: HTH-type transcriptional regulator MetR (317 aa).

One can recognise an HTH lysR-type domain in the interval 1–59; it reads MIEVKHLKTLQALRNCGSLAAAAATLHQTQSALSHQFSDLEQRLGFRLFVRKSQPLRFT. A DNA-binding region (H-T-H motif) is located at residues 19 to 38; sequence LAAAAATLHQTQSALSHQFS.

It belongs to the LysR transcriptional regulatory family.

Its subcellular location is the cytoplasm. Functionally, control of the last step in methionine biosynthesis; MetR is a positive activator of the metA, metE and metH genes. It is also a negative regulator of its own expression. The chain is HTH-type transcriptional regulator MetR (metR) from Escherichia coli O157:H7.